The chain runs to 527 residues: Bifunctional purine biosynthesis protein PurH (527 aa).

The MGS-like domain maps to 8-156 (AGAKRPIRRA…KNHPSVAVVV (149 aa)).

The protein belongs to the PurH family.

The enzyme catalyses (6R)-10-formyltetrahydrofolate + 5-amino-1-(5-phospho-beta-D-ribosyl)imidazole-4-carboxamide = 5-formamido-1-(5-phospho-D-ribosyl)imidazole-4-carboxamide + (6S)-5,6,7,8-tetrahydrofolate. It carries out the reaction IMP + H2O = 5-formamido-1-(5-phospho-D-ribosyl)imidazole-4-carboxamide. It functions in the pathway purine metabolism; IMP biosynthesis via de novo pathway; 5-formamido-1-(5-phospho-D-ribosyl)imidazole-4-carboxamide from 5-amino-1-(5-phospho-D-ribosyl)imidazole-4-carboxamide (10-formyl THF route): step 1/1. It participates in purine metabolism; IMP biosynthesis via de novo pathway; IMP from 5-formamido-1-(5-phospho-D-ribosyl)imidazole-4-carboxamide: step 1/1. The sequence is that of Bifunctional purine biosynthesis protein PurH from Mycobacterium sp. (strain KMS).